We begin with the raw amino-acid sequence, 349 residues long: 11-beta-hydroxysteroid dehydrogenase A (349 aa).

Residues 10-30 (LVAPPFTFFFLCLFLPPYWGL) traverse the membrane as a helical; Signal-anchor for type II membrane protein segment. Positions 13–26 (PPFTFFFLCLFLPP) match the Proline-knob motif. Residues 54 to 80 (GASSGIGEYLAYEYAKRGACLALSARR), D105, and 132 to 135 (NAAI) contribute to the NADP(+) site. Substrate is bound at residue S184. Y197 functions as the Proton acceptor in the catalytic mechanism. Residues 197–201 (YSASK) and K201 each bind NADP(+).

This sequence belongs to the short-chain dehydrogenases/reductases (SDR) family. In terms of tissue distribution, expressed in seeds (at protein level).

The protein localises to the lipid droplet. It is found in the membrane. It carries out the reaction an 11beta-hydroxysteroid + NADP(+) = an 11-oxosteroid + NADPH + H(+). Has dehydrogenase activity against 11 beta-hydroxysteroid and 17 beta-hydroxysteroid. May be involved in signal transduction regulated by various sterols. In Arachis hypogaea (Peanut), this protein is 11-beta-hydroxysteroid dehydrogenase A.